The sequence spans 76 residues: uncharacterized protein (76 aa).

The helical transmembrane segment at 53 to 70 (STKLHIIWFCIFAIFIAV) threads the bilayer.

It localises to the membrane. This is an uncharacterized protein from Haemophilus influenzae (strain ATCC 51907 / DSM 11121 / KW20 / Rd).